The primary structure comprises 232 residues: DNA repair protein RecO (232 aa).

The protein belongs to the RecO family.

Functionally, involved in DNA repair and RecF pathway recombination. This chain is DNA repair protein RecO, found in Francisella tularensis subsp. novicida (strain U112).